A 256-amino-acid chain; its full sequence is Late embryogenesis abundant protein 32 (256 aa).

Positions 1-14 (MSQEQPRRPREPVK) are enriched in basic and acidic residues. A disordered region spans residues 1–20 (MSQEQPRRPREPVKYGDVFE). Residues 5–9 (QPRRP) carry the Nuclear localization signal (NLS) motif. 3 consecutive SMP domains span residues 13–66 (VKYG…TTNI), 130–187 (ITIG…HNAT), and 195–253 (IKLR…LNER).

It belongs to the LEA type SMP family. In terms of tissue distribution, embryo specific, only in dry mature seeds. Expressed at low levels.

It is found in the cytoplasm. It localises to the nucleus. Functionally, LEA proteins are late embryonic proteins abundant in higher plant seed embryos. The function of those proteins is not known. This chain is Late embryogenesis abundant protein 32, found in Arabidopsis thaliana (Mouse-ear cress).